A 406-amino-acid chain; its full sequence is Nicotinate phosphoribosyltransferase (406 aa).

At His-226 the chain carries Phosphohistidine; by autocatalysis.

Belongs to the NAPRTase family. Post-translationally, transiently phosphorylated on a His residue during the reaction cycle. Phosphorylation strongly increases the affinity for substrates and increases the rate of nicotinate D-ribonucleotide production. Dephosphorylation regenerates the low-affinity form of the enzyme, leading to product release.

The enzyme catalyses nicotinate + 5-phospho-alpha-D-ribose 1-diphosphate + ATP + H2O = nicotinate beta-D-ribonucleotide + ADP + phosphate + diphosphate. It participates in cofactor biosynthesis; NAD(+) biosynthesis; nicotinate D-ribonucleotide from nicotinate: step 1/1. In terms of biological role, catalyzes the synthesis of beta-nicotinate D-ribonucleotide from nicotinate and 5-phospho-D-ribose 1-phosphate at the expense of ATP. This Verminephrobacter eiseniae (strain EF01-2) protein is Nicotinate phosphoribosyltransferase.